The chain runs to 158 residues: GTP-dependent dephospho-CoA kinase (158 aa).

GTP is bound by residues Asp35, Ile36, Val37, Asp54, Lys56, Glu109, and Asp132.

It belongs to the GTP-dependent DPCK family.

The catalysed reaction is 3'-dephospho-CoA + GTP = GDP + CoA + H(+). The protein operates within cofactor biosynthesis; coenzyme A biosynthesis. Functionally, catalyzes the GTP-dependent phosphorylation of the 3'-hydroxyl group of dephosphocoenzyme A to form coenzyme A (CoA). This Methanocaldococcus jannaschii (strain ATCC 43067 / DSM 2661 / JAL-1 / JCM 10045 / NBRC 100440) (Methanococcus jannaschii) protein is GTP-dependent dephospho-CoA kinase.